A 295-amino-acid chain; its full sequence is MEPFRNIGIIGRLGSTQVLDTIRRLKKFLIDRHLHVILEDTIAEVLPGHGLQTCSRKIMGEICDLVVVVGGDGSMLGAARALARHKVPVLGINRGSLGFLTDIRPDELEAKVGEVLDGQYIVESRFLLDAQVRRGIDSMGQGDALNDVVLHPGKSTRMIEFELYIDGQFVCSQKADGLIVATPTGSTAYALSAGGPIMHPKLDAIVIVPMYPHMLSSRPIVVDGNSELKIVVSPNMQIYPQVSCDGQNHFTCAPGDTVTISKKPQKLRLIHPIDHNYYEICRTKLGWGSRLGGGD.

Residue D72 is the Proton acceptor of the active site. NAD(+) is bound by residues 72 to 73 (DG), 146 to 147 (ND), R157, K174, D176, 187 to 192 (TAYALS), and Q247.

This sequence belongs to the NAD kinase family. It depends on a divalent metal cation as a cofactor.

It localises to the cytoplasm. The catalysed reaction is NAD(+) + ATP = ADP + NADP(+) + H(+). Involved in the regulation of the intracellular balance of NAD and NADP, and is a key enzyme in the biosynthesis of NADP. Catalyzes specifically the phosphorylation on 2'-hydroxyl of the adenosine moiety of NAD to yield NADP. In Pseudomonas aeruginosa (strain LESB58), this protein is NAD kinase.